The primary structure comprises 206 residues: Two-component response regulator ARR15 (206 aa).

Residues 19 to 146 (HVLAVDDSFV…DVKRLKELIM (128 aa)) form the Response regulatory domain. At Asp79 the chain carries 4-aspartylphosphate. Residues 151–206 (AEEGKTKKLSPKRILQNDIDSSPSSSSTSSSSSSHDVSSLDDDTPSSKRIKLESRG) are disordered. A compositionally biased stretch (low complexity) spans 168–187 (DIDSSPSSSSTSSSSSSHDV).

It belongs to the ARR family. Type-A subfamily. Two-component system major event consists of a His-to-Asp phosphorelay between a sensor histidine kinase (HK) and a response regulator (RR). In plants, the His-to-Asp phosphorelay involves an additional intermediate named Histidine-containing phosphotransfer protein (HPt). This multistep phosphorelay consists of a His-Asp-His-Asp sequential transfer of a phosphate group between first a His and an Asp of the HK protein, followed by the transfer to a conserved His of the HPt protein and finally the transfer to an Asp in the receiver domain of the RR protein.

Its subcellular location is the nucleus. In terms of biological role, functions as a response regulator involved in His-to-Asp phosphorelay signal transduction system. Phosphorylation of the Asp residue in the receiver domain activates the ability of the protein to promote the transcription of target genes. Type-A response regulators seem to act as negative regulators of the cytokinin signaling. This Arabidopsis thaliana (Mouse-ear cress) protein is Two-component response regulator ARR15 (ARR15).